The primary structure comprises 220 residues: Thiamine-phosphate synthase (220 aa).

4-amino-2-methyl-5-(diphosphooxymethyl)pyrimidine contacts are provided by residues 47-51 (QYREK) and N78. The Mg(2+) site is built by D79 and D98. A 4-amino-2-methyl-5-(diphosphooxymethyl)pyrimidine-binding site is contributed by S117. Residue 143–145 (TAT) participates in 2-[(2R,5Z)-2-carboxy-4-methylthiazol-5(2H)-ylidene]ethyl phosphate binding. K146 contributes to the 4-amino-2-methyl-5-(diphosphooxymethyl)pyrimidine binding site. Residues G174 and 194–195 (IS) contribute to the 2-[(2R,5Z)-2-carboxy-4-methylthiazol-5(2H)-ylidene]ethyl phosphate site.

Belongs to the thiamine-phosphate synthase family. The cofactor is Mg(2+).

The catalysed reaction is 2-[(2R,5Z)-2-carboxy-4-methylthiazol-5(2H)-ylidene]ethyl phosphate + 4-amino-2-methyl-5-(diphosphooxymethyl)pyrimidine + 2 H(+) = thiamine phosphate + CO2 + diphosphate. It catalyses the reaction 2-(2-carboxy-4-methylthiazol-5-yl)ethyl phosphate + 4-amino-2-methyl-5-(diphosphooxymethyl)pyrimidine + 2 H(+) = thiamine phosphate + CO2 + diphosphate. It carries out the reaction 4-methyl-5-(2-phosphooxyethyl)-thiazole + 4-amino-2-methyl-5-(diphosphooxymethyl)pyrimidine + H(+) = thiamine phosphate + diphosphate. The protein operates within cofactor biosynthesis; thiamine diphosphate biosynthesis; thiamine phosphate from 4-amino-2-methyl-5-diphosphomethylpyrimidine and 4-methyl-5-(2-phosphoethyl)-thiazole: step 1/1. Condenses 4-methyl-5-(beta-hydroxyethyl)thiazole monophosphate (THZ-P) and 2-methyl-4-amino-5-hydroxymethyl pyrimidine pyrophosphate (HMP-PP) to form thiamine monophosphate (TMP). The protein is Thiamine-phosphate synthase of Methanosarcina barkeri (strain Fusaro / DSM 804).